The sequence spans 95 residues: Small ribosomal subunit protein uS19 (95 aa).

This sequence belongs to the universal ribosomal protein uS19 family.

Its function is as follows. Protein S19 forms a complex with S13 that binds strongly to the 16S ribosomal RNA. This is Small ribosomal subunit protein uS19 from Syntrophobacter fumaroxidans (strain DSM 10017 / MPOB).